A 361-amino-acid chain; its full sequence is Alanine racemase 2 (361 aa).

K30 functions as the Proton acceptor; specific for D-alanine in the catalytic mechanism. An N6-(pyridoxal phosphate)lysine modification is found at K30. R122 is a substrate binding site. The Proton acceptor; specific for L-alanine role is filled by Y256. Residue M303 coordinates substrate.

This sequence belongs to the alanine racemase family. It depends on pyridoxal 5'-phosphate as a cofactor.

It carries out the reaction L-alanine = D-alanine. The protein operates within amino-acid biosynthesis; D-alanine biosynthesis; D-alanine from L-alanine: step 1/1. Its function is as follows. Catalyzes the interconversion of L-alanine and D-alanine. May also act on other amino acids. The chain is Alanine racemase 2 (alr2) from Staphylococcus aureus (strain Mu50 / ATCC 700699).